The following is a 168-amino-acid chain: Dual-action ribosomal maturation protein DarP (168 aa).

Belongs to the DarP family.

It is found in the cytoplasm. In terms of biological role, member of a network of 50S ribosomal subunit biogenesis factors which assembles along the 30S-50S interface, preventing incorrect 23S rRNA structures from forming. Promotes peptidyl transferase center (PTC) maturation. The sequence is that of Dual-action ribosomal maturation protein DarP from Neisseria meningitidis serogroup B (strain ATCC BAA-335 / MC58).